We begin with the raw amino-acid sequence, 739 residues long: Phosphoribosylformylglycinamidine synthase subunit PurL (739 aa).

His-54 is a catalytic residue. ATP contacts are provided by Tyr-57 and Lys-96. Glu-98 provides a ligand contact to Mg(2+). Substrate-binding positions include 99–102 and Arg-121; that span reads SHNH. The active-site Proton acceptor is the His-100. Position 122 (Asp-122) interacts with Mg(2+). Residue Gln-245 participates in substrate binding. Asp-273 contacts Mg(2+). A substrate-binding site is contributed by 317–319; that stretch reads ESQ. Residues Asp-500 and Gly-537 each coordinate ATP. Residue Asn-538 participates in Mg(2+) binding. Ser-540 serves as a coordination point for substrate.

The protein belongs to the FGAMS family. In terms of assembly, monomer. Part of the FGAM synthase complex composed of 1 PurL, 1 PurQ and 2 PurS subunits.

The protein localises to the cytoplasm. The catalysed reaction is N(2)-formyl-N(1)-(5-phospho-beta-D-ribosyl)glycinamide + L-glutamine + ATP + H2O = 2-formamido-N(1)-(5-O-phospho-beta-D-ribosyl)acetamidine + L-glutamate + ADP + phosphate + H(+). It participates in purine metabolism; IMP biosynthesis via de novo pathway; 5-amino-1-(5-phospho-D-ribosyl)imidazole from N(2)-formyl-N(1)-(5-phospho-D-ribosyl)glycinamide: step 1/2. Part of the phosphoribosylformylglycinamidine synthase complex involved in the purines biosynthetic pathway. Catalyzes the ATP-dependent conversion of formylglycinamide ribonucleotide (FGAR) and glutamine to yield formylglycinamidine ribonucleotide (FGAM) and glutamate. The FGAM synthase complex is composed of three subunits. PurQ produces an ammonia molecule by converting glutamine to glutamate. PurL transfers the ammonia molecule to FGAR to form FGAM in an ATP-dependent manner. PurS interacts with PurQ and PurL and is thought to assist in the transfer of the ammonia molecule from PurQ to PurL. This Bacillus cereus (strain ATCC 10987 / NRS 248) protein is Phosphoribosylformylglycinamidine synthase subunit PurL.